The following is a 154-amino-acid chain: Superoxide dismutase [Cu-Zn] (154 aa).

Positions 47, 49, and 64 each coordinate Cu cation. Cysteine 58 and cysteine 147 are oxidised to a cystine. 4 residues coordinate Zn(2+): histidine 64, histidine 72, histidine 81, and aspartate 84. Histidine 121 provides a ligand contact to Cu cation. Arginine 144 contributes to the substrate binding site.

It belongs to the Cu-Zn superoxide dismutase family. In terms of assembly, homodimer. Requires Cu cation as cofactor. Zn(2+) serves as cofactor.

The protein localises to the cytoplasm. It catalyses the reaction 2 superoxide + 2 H(+) = H2O2 + O2. Functionally, destroys radicals which are normally produced within the cells and which are toxic to biological systems. The sequence is that of Superoxide dismutase [Cu-Zn] (SOD1) from Podospora anserina (Pleurage anserina).